The primary structure comprises 111 residues: uncharacterized protein (111 aa).

Residues 64–86 (VLCWLVLPLYCCNLLNLFFNIFL) form a helical membrane-spanning segment.

It localises to the membrane. This is an uncharacterized protein from Saccharomyces cerevisiae (strain ATCC 204508 / S288c) (Baker's yeast).